Here is a 109-residue protein sequence, read N- to C-terminus: Phosphocarrier protein HPr (109 aa).

The HPr domain maps to 22–109 (ELSAVFTIRN…EVFNSGFGEL (88 aa)). The active-site Pros-phosphohistidine intermediate is the His36.

Belongs to the HPr family.

It is found in the cytoplasm. General (non sugar-specific) component of the phosphoenolpyruvate-dependent sugar phosphotransferase system (sugar PTS). This major carbohydrate active-transport system catalyzes the phosphorylation of incoming sugar substrates concomitantly with their translocation across the cell membrane. The phosphoryl group from phosphoenolpyruvate (PEP) is transferred to the phosphoryl carrier protein HPr by enzyme I. Phospho-HPr then transfers it to the PTS EIIA domain. This is Phosphocarrier protein HPr (ptsH) from Chlamydia trachomatis serovar D (strain ATCC VR-885 / DSM 19411 / UW-3/Cx).